A 162-amino-acid chain; its full sequence is uncharacterized protein (162 aa).

Residues 1–34 (MRKKNNIKKWLLIIAGFLIICIITLFVMVSGNKV) form the signal peptide.

This is an uncharacterized protein from Bacillus subtilis (strain 168).